A 365-amino-acid chain; its full sequence is Outer membrane protein assembly factor BamC (365 aa).

A signal peptide spans 1–19 (MKHNRLAIAALAPVLILVG). The N-palmitoyl cysteine moiety is linked to residue cysteine 20. Cysteine 20 is lipidated: S-diacylglycerol cysteine.

It belongs to the BamC family. In terms of assembly, part of the Bam complex.

The protein localises to the cell outer membrane. In terms of biological role, part of the outer membrane protein assembly complex, which is involved in assembly and insertion of beta-barrel proteins into the outer membrane. In Ferrimonas balearica (strain DSM 9799 / CCM 4581 / KCTC 23876 / PAT), this protein is Outer membrane protein assembly factor BamC.